The sequence spans 237 residues: DNA repair protein RecO (237 aa).

The protein belongs to the RecO family.

Its function is as follows. Involved in DNA repair and RecF pathway recombination. This Flavobacterium johnsoniae (strain ATCC 17061 / DSM 2064 / JCM 8514 / BCRC 14874 / CCUG 350202 / NBRC 14942 / NCIMB 11054 / UW101) (Cytophaga johnsonae) protein is DNA repair protein RecO.